Here is a 335-residue protein sequence, read N- to C-terminus: MEPGSQQQPSAPGQQPPPVGHQIVHVRTDSETDLETLFNAVMNPKNANVPQTLPMRMRKLPDSFFKQPEPKSHSRHVDQTTTWQDPRKAMLSQINITAPTSPPVQQNIMTPTAMNQQRLSQSAPVKSPPALQPQSPPSGVLGSGGNQQMRLQQLQMEKERLRLKHQELLRQVRPQELALRSQIPPMEQDSGPPNPVCSSGISQELRTMTMNSSDPFLNSGTYHSRDESTDSGLSMSSYSVPRTPDDFLNSVDEMDTGEAITQSTIPTQQNRFPDYLETLPGTNVDLGTLEGEAMNVEGEELMPSLQEALSSDILNDMETVLAATKLDKESFLTWL.

The segment covering 1 to 13 has biased composition (low complexity); it reads MEPGSQQQPSAPG. The tract at residues 1–21 is disordered; that stretch reads MEPGSQQQPSAPGQQPPPVGH. Serine 30 is modified (phosphoserine; by LATS1 and LATS2). Residues 114–124 are compositionally biased toward polar residues; it reads MNQQRLSQSAP. Positions 114-146 are disordered; that stretch reads MNQQRLSQSAPVKSPPALQPQSPPSGVLGSGGN. Over residues 126 to 136 the composition is skewed to pro residues; that stretch reads KSPPALQPQSP. The tract at residues 137-335 is transactivation domain; it reads PSGVLGSGGN…LDKESFLTWL (199 aa). A coiled-coil region spans residues 145–173; that stretch reads GNQQMRLQQLQMEKERLRLKHQELLRQVR.

This sequence belongs to the YAP1 family. Phosphorylated by lats1 and lats2; leading to cytoplasmic translocation and inactivation.

The protein localises to the cytoplasm. It is found in the nucleus. It localises to the cell junction. Its subcellular location is the tight junction. The protein resides in the cell membrane. Transcriptional regulator which can act both as a coactivator and a corepressor and is the critical downstream regulatory target in the Hippo signaling pathway that plays a pivotal role in organ size control and tumor suppression by restricting proliferation and promoting apoptosis. Plays a key role in tissue tension and 3D tissue shape by regulating cortical actomyosin network formation. This is Transcriptional coactivator YAP1-B from Xenopus laevis (African clawed frog).